The sequence spans 232 residues: Imidazoleglycerol-phosphate dehydratase (232 aa).

This sequence belongs to the imidazoleglycerol-phosphate dehydratase family.

The enzyme catalyses D-erythro-1-(imidazol-4-yl)glycerol 3-phosphate = 3-(imidazol-4-yl)-2-oxopropyl phosphate + H2O. The protein operates within amino-acid biosynthesis; L-histidine biosynthesis; L-histidine from 5-phospho-alpha-D-ribose 1-diphosphate: step 6/9. The polypeptide is Imidazoleglycerol-phosphate dehydratase (HIS3) (Lachancea kluyveri (strain ATCC 58438 / CBS 3082 / BCRC 21498 / NBRC 1685 / JCM 7257 / NCYC 543 / NRRL Y-12651) (Yeast)).